Here is an 89-residue protein sequence, read N- to C-terminus: Small ribosomal subunit protein uS15 (89 aa).

The protein belongs to the universal ribosomal protein uS15 family. Part of the 30S ribosomal subunit. Forms a bridge to the 50S subunit in the 70S ribosome, contacting the 23S rRNA.

In terms of biological role, one of the primary rRNA binding proteins, it binds directly to 16S rRNA where it helps nucleate assembly of the platform of the 30S subunit by binding and bridging several RNA helices of the 16S rRNA. Functionally, forms an intersubunit bridge (bridge B4) with the 23S rRNA of the 50S subunit in the ribosome. This is Small ribosomal subunit protein uS15 from Salinispora arenicola (strain CNS-205).